The following is a 193-amino-acid chain: 3-isopropylmalate dehydratase small subunit (193 aa).

The protein belongs to the LeuD family. LeuD type 1 subfamily. In terms of assembly, heterodimer of LeuC and LeuD.

The catalysed reaction is (2R,3S)-3-isopropylmalate = (2S)-2-isopropylmalate. The protein operates within amino-acid biosynthesis; L-leucine biosynthesis; L-leucine from 3-methyl-2-oxobutanoate: step 2/4. In terms of biological role, catalyzes the isomerization between 2-isopropylmalate and 3-isopropylmalate, via the formation of 2-isopropylmaleate. This is 3-isopropylmalate dehydratase small subunit from Listeria innocua serovar 6a (strain ATCC BAA-680 / CLIP 11262).